Consider the following 191-residue polypeptide: Holliday junction branch migration complex subunit RuvA (191 aa).

The interval 1-64 is domain I; that stretch reads MIGRITGTLA…EDAHLLYGFG (64 aa). Residues 65–138 are domain II; sequence SEVERAAFRE…KGKPVFAGAL (74 aa). The flexible linker stretch occupies residues 138–141; that stretch reads LASV. Residues 142–191 are domain III; it reads PSAGASDDVRQALLALGYNERETAATVRELPAGLAVGEAIRQALRALSRA.

This sequence belongs to the RuvA family. As to quaternary structure, homotetramer. Forms an RuvA(8)-RuvB(12)-Holliday junction (HJ) complex. HJ DNA is sandwiched between 2 RuvA tetramers; dsDNA enters through RuvA and exits via RuvB. An RuvB hexamer assembles on each DNA strand where it exits the tetramer. Each RuvB hexamer is contacted by two RuvA subunits (via domain III) on 2 adjacent RuvB subunits; this complex drives branch migration. In the full resolvosome a probable DNA-RuvA(4)-RuvB(12)-RuvC(2) complex forms which resolves the HJ.

The protein localises to the cytoplasm. Functionally, the RuvA-RuvB-RuvC complex processes Holliday junction (HJ) DNA during genetic recombination and DNA repair, while the RuvA-RuvB complex plays an important role in the rescue of blocked DNA replication forks via replication fork reversal (RFR). RuvA specifically binds to HJ cruciform DNA, conferring on it an open structure. The RuvB hexamer acts as an ATP-dependent pump, pulling dsDNA into and through the RuvAB complex. HJ branch migration allows RuvC to scan DNA until it finds its consensus sequence, where it cleaves and resolves the cruciform DNA. The protein is Holliday junction branch migration complex subunit RuvA of Thiobacillus denitrificans (strain ATCC 25259 / T1).